We begin with the raw amino-acid sequence, 247 residues long: Orotidine 5'-phosphate decarboxylase (247 aa).

Residues Asp-21, Lys-43, 70 to 79 (DMKFHDIPNT), Thr-129, Arg-190, Gln-199, Gly-219, and Arg-220 contribute to the substrate site. Catalysis depends on Lys-72, which acts as the Proton donor.

Belongs to the OMP decarboxylase family. Type 1 subfamily. Homodimer.

It catalyses the reaction orotidine 5'-phosphate + H(+) = UMP + CO2. The protein operates within pyrimidine metabolism; UMP biosynthesis via de novo pathway; UMP from orotate: step 2/2. In terms of biological role, catalyzes the decarboxylation of orotidine 5'-monophosphate (OMP) to uridine 5'-monophosphate (UMP). The protein is Orotidine 5'-phosphate decarboxylase of Chromobacterium violaceum (strain ATCC 12472 / DSM 30191 / JCM 1249 / CCUG 213 / NBRC 12614 / NCIMB 9131 / NCTC 9757 / MK).